The following is a 334-amino-acid chain: MAFNLRNRNFLKLLDFSTKEIQFLIDLSADLKKAKYAGTEQKKLLGKNIALIFEKASTRTRCAFEVAAFDQGAQVTYIGPSGSQIGDKESMKDTARVLGRMYDGIQYRGFGQAIVEELGAFAGVPVWNGLTDEFHPTQILADFLTMLEHSQGKALADIQFAYLGDARNNVGNSLMVGAAKMGMDISLVGPQAYWPDEELVTACQAIAKQTGGKITLTENVAEGVQGCDFLYTDVWVSMGESPEAWDERVALMKPYQVNTNVLKQTGNPNVKFMHCLPAFHNDETTIGKQVADKFGMKGLEVTEEVFESEHSIVFDEAENRMHTIKAVMVATLGS.

Carbamoyl phosphate-binding positions include 57–60 (STRT), Q84, R108, and 135–138 (HPTQ). L-ornithine contacts are provided by residues N169, D233, and 237–238 (SM). Carbamoyl phosphate-binding positions include 275-276 (CL) and R320.

This sequence belongs to the aspartate/ornithine carbamoyltransferase superfamily. OTCase family.

The protein resides in the cytoplasm. It carries out the reaction carbamoyl phosphate + L-ornithine = L-citrulline + phosphate + H(+). It functions in the pathway amino-acid biosynthesis; L-arginine biosynthesis; L-arginine from L-ornithine and carbamoyl phosphate: step 1/3. Its function is as follows. Reversibly catalyzes the transfer of the carbamoyl group from carbamoyl phosphate (CP) to the N(epsilon) atom of ornithine (ORN) to produce L-citrulline. The sequence is that of Ornithine carbamoyltransferase from Vibrio vulnificus (strain YJ016).